A 706-amino-acid polypeptide reads, in one-letter code: Probable E3 ubiquitin ligase complex SCF subunit sconB (706 aa).

The span at M1–S12 shows a compositional bias: basic and acidic residues. 2 disordered regions span residues M1–Q43 and T56–A76. A compositionally biased stretch (low complexity) spans Q34–Q43. One can recognise an F-box domain in the interval I203–M249. WD repeat units follow at residues G377–T414, G417–T456, H458–L494, G496–H537, A589–T632, G635–T672, and G675–N706.

Belongs to the WD repeat MET30/SCONB/SCON-2 family. As to quaternary structure, component of the SCF(sconB) E3 ubiquitin ligase complex.

The protein operates within protein modification; protein ubiquitination. Its function is as follows. Component of the SCF(sconB) E3 ubiquitin ligase complex involved in the regulation of sulfur metabolite repression, probably by mediating the inactivation or degradation of the metR transcription factor. The sequence is that of Probable E3 ubiquitin ligase complex SCF subunit sconB (sconB) from Aspergillus flavus (strain ATCC 200026 / FGSC A1120 / IAM 13836 / NRRL 3357 / JCM 12722 / SRRC 167).